Here is a 642-residue protein sequence, read N- to C-terminus: Phosphomethylpyrimidine synthase (642 aa).

Substrate is bound by residues Asn-235, Met-264, Tyr-293, His-329, Ser-349–Gly-351, Asp-390–Arg-393, and Glu-429. His-433 serves as a coordination point for Zn(2+). Tyr-456 lines the substrate pocket. His-497 contributes to the Zn(2+) binding site. Residues Cys-577, Cys-580, and Cys-585 each coordinate [4Fe-4S] cluster.

The protein belongs to the ThiC family. Homodimer. [4Fe-4S] cluster serves as cofactor.

It carries out the reaction 5-amino-1-(5-phospho-beta-D-ribosyl)imidazole + S-adenosyl-L-methionine = 4-amino-2-methyl-5-(phosphooxymethyl)pyrimidine + CO + 5'-deoxyadenosine + formate + L-methionine + 3 H(+). Its pathway is cofactor biosynthesis; thiamine diphosphate biosynthesis. Catalyzes the synthesis of the hydroxymethylpyrimidine phosphate (HMP-P) moiety of thiamine from aminoimidazole ribotide (AIR) in a radical S-adenosyl-L-methionine (SAM)-dependent reaction. In Alteromonas mediterranea (strain DSM 17117 / CIP 110805 / LMG 28347 / Deep ecotype), this protein is Phosphomethylpyrimidine synthase.